Consider the following 346-residue polypeptide: LRP2-binding protein (346 aa).

One copy of the TPR repeat lies at 58-91 (AMAYFLRGQLYFEEGWYEEALAQFEEIQEKDHQA). Sel1-like repeat units lie at residues 92-124 (IYQL…DSSC), 132-167 (FAAA…DNGN), 172-205 (VKAQ…GNGN), 206-241 (LESQ…ERGN), 242-276 (VYAQ…EVHD), and 296-331 (AMAS…RLNP).

As to quaternary structure, interacts with LRP2.

It is found in the cytoplasm. May act as an adapter that regulates LRP2 function. In Rattus norvegicus (Rat), this protein is LRP2-binding protein (Lrp2bp).